The chain runs to 396 residues: NADH-quinone oxidoreductase subunit D (396 aa).

This sequence belongs to the complex I 49 kDa subunit family. NDH-1 is composed of 14 different subunits. Subunits NuoB, C, D, E, F, and G constitute the peripheral sector of the complex.

It is found in the cell inner membrane. The catalysed reaction is a quinone + NADH + 5 H(+)(in) = a quinol + NAD(+) + 4 H(+)(out). NDH-1 shuttles electrons from NADH, via FMN and iron-sulfur (Fe-S) centers, to quinones in the respiratory chain. The immediate electron acceptor for the enzyme in this species is believed to be ubiquinone. Couples the redox reaction to proton translocation (for every two electrons transferred, four hydrogen ions are translocated across the cytoplasmic membrane), and thus conserves the redox energy in a proton gradient. The sequence is that of NADH-quinone oxidoreductase subunit D from Bartonella bacilliformis (strain ATCC 35685 / KC583 / Herrer 020/F12,63).